The sequence spans 495 residues: Solute carrier family 2, facilitated glucose transporter member 3 (495 aa).

Topologically, residues 1-10 (MGTQKVTVSL) are cytoplasmic. Residues 11–32 (IFALSIATIGSFQFGYNTGVIN) form a helical membrane-spanning segment. Residues 33–64 (APETIIKDFLNYTLEEKSENLPTEVLLTSLWS) lie on the Extracellular side of the membrane. A glycan (N-linked (GlcNAc...) asparagine) is linked at N43. A helical transmembrane segment spans residues 65 to 85 (LSVAIFSVGGMIGSFSVGLFV). The Cytoplasmic segment spans residues 86 to 90 (NRFGR). Residues 91–111 (RNSMLMVNLLAVAGGCLMGFC) form a helical membrane-spanning segment. Over 112–118 (KIAQSVE) the chain is Extracellular. The helical transmembrane segment at 119-142 (MLILGRLIIGLFCGLCTGFVPMYI) threads the bilayer. Over 143–153 (GEISPTALRGA) the chain is Cytoplasmic. Residues 154–174 (FGTLNQLGIVIGILVAQIFGL) traverse the membrane as a helical segment. Residue Q159 coordinates D-glucose. Residues 175 to 183 (KVIMGTEEL) are Extracellular-facing. Residues 184–204 (WPLLLGFTIIPAVLQSAALPF) form a helical membrane-spanning segment. At 205 to 269 (CPESPRFLLI…LFRSRSYRQP (65 aa)) the chain is on the cytoplasmic side. Phosphothreonine is present on T232. A helical membrane pass occupies residues 270-290 (IIISIMLQLSQQLSGINAVFY). Positions 277–279 (QLS) are important for selectivity against fructose. D-glucose contacts are provided by residues 280 to 281 (QQ) and N286. Topologically, residues 291–304 (YSTGIFKDAGVEEP) are extracellular. The chain crosses the membrane as a helical span at residues 305-325 (IYATIGAGVVNTIFTVVSLFL). Position 315 (N315) interacts with D-glucose. At 326–331 (VERAGR) the chain is on the cytoplasmic side. A helical membrane pass occupies residues 332–352 (RTLHMIGLGGMAVCSILMTIS). The Extracellular portion of the chain corresponds to 353 to 363 (LLLKDNYNWMS). A helical membrane pass occupies residues 364–389 (FVCIGAILVFVAFFEIGPGPIPWFIV). Residues E378 and W386 each coordinate D-glucose. Residues 390–399 (AELFSQGPRP) are Cytoplasmic-facing. A helical membrane pass occupies residues 400–420 (AAMAVAGCSNWTSNFLVGLLF). The Extracellular portion of the chain corresponds to 421 to 429 (PSAAFYLGA). The chain crosses the membrane as a helical span at residues 430 to 450 (YVFIIFTGFLIVFLVFTFFKV). Residues 451 to 495 (PETRGRTFEEITRAFEGQGQDANRAEKGPIVEMNSMQPVKETATV) lie on the Cytoplasmic side of the membrane. S485 is modified (phosphoserine). T492 is modified (phosphothreonine).

Belongs to the major facilitator superfamily. Sugar transporter (TC 2.A.1.1) family. Glucose transporter subfamily. In terms of assembly, interacts with SMIM43; the interaction may promote SLC2A3-mediated glucose transport to meet the energy needs of mesendoderm differentiation.

The protein localises to the cell membrane. It localises to the perikaryon. It is found in the cell projection. The catalysed reaction is D-glucose(out) = D-glucose(in). The enzyme catalyses D-galactose(in) = D-galactose(out). With respect to regulation, deoxyglucose transport is inhibited by D-glucose, D-galactose and maltose. Galactose transport is inhibited by D-glucose and maltose. Its function is as follows. Facilitative glucose transporter. Can also mediate the uptake of various other monosaccharides across the cell membrane. Mediates the uptake of glucose, 2-deoxyglucose, galactose, mannose, xylose and fucose, and probably also dehydroascorbate. Does not mediate fructose transport. Required for mesendoderm differentiation. The polypeptide is Solute carrier family 2, facilitated glucose transporter member 3 (Canis lupus familiaris (Dog)).